The following is a 118-amino-acid chain: Small ribosomal subunit protein eS24 (118 aa).

It belongs to the eukaryotic ribosomal protein eS24 family.

The sequence is that of Small ribosomal subunit protein eS24 from Sulfolobus acidocaldarius (strain ATCC 33909 / DSM 639 / JCM 8929 / NBRC 15157 / NCIMB 11770).